The following is a 29-amino-acid chain: Trypsin inhibitor 2 (29 aa).

Disulfide bonds link cysteine 3–cysteine 20, cysteine 10–cysteine 22, and cysteine 16–cysteine 28.

It belongs to the protease inhibitor I7 (squash-type serine protease inhibitor) family.

Its subcellular location is the secreted. In terms of biological role, inhibits trypsin. The polypeptide is Trypsin inhibitor 2 (Bryonia dioica (Red bryony)).